The primary structure comprises 265 residues: 4-hydroxy-tetrahydrodipicolinate reductase (265 aa).

NAD(+) is bound by residues 7–12 (GASGRM) and Asp-33. Position 34 (Arg-34) interacts with NADP(+). Residues 96 to 98 (GTT) and 120 to 123 (AANM) each bind NAD(+). His-153 functions as the Proton donor/acceptor in the catalytic mechanism. Position 154 (His-154) interacts with (S)-2,3,4,5-tetrahydrodipicolinate. Lys-157 acts as the Proton donor in catalysis. (S)-2,3,4,5-tetrahydrodipicolinate is bound at residue 163–164 (GT).

It belongs to the DapB family.

It is found in the cytoplasm. It catalyses the reaction (S)-2,3,4,5-tetrahydrodipicolinate + NAD(+) + H2O = (2S,4S)-4-hydroxy-2,3,4,5-tetrahydrodipicolinate + NADH + H(+). The enzyme catalyses (S)-2,3,4,5-tetrahydrodipicolinate + NADP(+) + H2O = (2S,4S)-4-hydroxy-2,3,4,5-tetrahydrodipicolinate + NADPH + H(+). It participates in amino-acid biosynthesis; L-lysine biosynthesis via DAP pathway; (S)-tetrahydrodipicolinate from L-aspartate: step 4/4. Catalyzes the conversion of 4-hydroxy-tetrahydrodipicolinate (HTPA) to tetrahydrodipicolinate. This Burkholderia ambifaria (strain MC40-6) protein is 4-hydroxy-tetrahydrodipicolinate reductase.